A 542-amino-acid polypeptide reads, in one-letter code: MPAKDVIFGDCARLRLMEGVNTLTDAVKVTLGPKGRNVVLERSYGSPAVTKDGVTVAKDIELRDRLQNMGAQMVKEVAAKTSDNAGDGTTTATVLAQSIVREGMRYVASGVNPMDIKRGIDQAVSSAVMELKKISRPCTTGKEIAQVGSVSANNDRTVGEMIAEAMNKVGKEGVITVEDGKSLADELEVVEGMQFDRGYLSPYFINNPDRQVAVLDSPFVLLCEKKVASIRDLLPIMERVAKAGRPLLIVAEDVEGEALATLVVNNARGILKAAAVKAPGFGDRRKAMLQDIAILTGGHVVSEETGLSLEKVSLPELGQAKRAEVAKDTTTIIDGAGDAKAINARIKHIRLQIEEAASDYDKEKLQERVAKLAGGVAVIRVGAATEVEMKEKKARVEDALHATRAAVEEGIVPGGGVALIRARNAISNLRCDNPDQDAGIRIVLRAMEEPLRQIVANGGEEASVVASSVASGKSISYGYNAAMRVYGDLMDAGVVDPTKVTRSALQNAASVAGLMLTTDVAVCDSPKREEAAPTQPVHGGVG.

ATP-binding positions include 30–33 (TLGP), lysine 51, 87–91 (DGTTT), glycine 415, 480–482 (NAA), and aspartate 496.

The protein belongs to the chaperonin (HSP60) family. As to quaternary structure, forms a cylinder of 14 subunits composed of two heptameric rings stacked back-to-back. Interacts with the co-chaperonin GroES.

Its subcellular location is the cytoplasm. The catalysed reaction is ATP + H2O + a folded polypeptide = ADP + phosphate + an unfolded polypeptide.. In terms of biological role, together with its co-chaperonin GroES, plays an essential role in assisting protein folding. The GroEL-GroES system forms a nano-cage that allows encapsulation of the non-native substrate proteins and provides a physical environment optimized to promote and accelerate protein folding. The polypeptide is Chaperonin GroEL (Tremblaya princeps).